We begin with the raw amino-acid sequence, 133 residues long: Hemiptericin (133 aa).

In terms of biological role, antibacterial peptide. Affects Gram-negative bacteria. The protein is Hemiptericin of Pyrrhocoris apterus (Sap sucking bug).